The primary structure comprises 190 residues: Adenine phosphoribosyltransferase (190 aa).

This sequence belongs to the purine/pyrimidine phosphoribosyltransferase family. As to quaternary structure, homodimer.

It localises to the cytoplasm. The enzyme catalyses AMP + diphosphate = 5-phospho-alpha-D-ribose 1-diphosphate + adenine. It functions in the pathway purine metabolism; AMP biosynthesis via salvage pathway; AMP from adenine: step 1/1. Functionally, catalyzes a salvage reaction resulting in the formation of AMP, that is energically less costly than de novo synthesis. The sequence is that of Adenine phosphoribosyltransferase from Cupriavidus pinatubonensis (strain JMP 134 / LMG 1197) (Cupriavidus necator (strain JMP 134)).